A 174-amino-acid chain; its full sequence is Crossover junction endodeoxyribonuclease RuvC (174 aa).

Catalysis depends on residues aspartate 8, glutamate 67, and aspartate 139. Residues aspartate 8, glutamate 67, and aspartate 139 each coordinate Mg(2+).

This sequence belongs to the RuvC family. Homodimer which binds Holliday junction (HJ) DNA. The HJ becomes 2-fold symmetrical on binding to RuvC with unstacked arms; it has a different conformation from HJ DNA in complex with RuvA. In the full resolvosome a probable DNA-RuvA(4)-RuvB(12)-RuvC(2) complex forms which resolves the HJ. Requires Mg(2+) as cofactor.

The protein localises to the cytoplasm. It catalyses the reaction Endonucleolytic cleavage at a junction such as a reciprocal single-stranded crossover between two homologous DNA duplexes (Holliday junction).. Its function is as follows. The RuvA-RuvB-RuvC complex processes Holliday junction (HJ) DNA during genetic recombination and DNA repair. Endonuclease that resolves HJ intermediates. Cleaves cruciform DNA by making single-stranded nicks across the HJ at symmetrical positions within the homologous arms, yielding a 5'-phosphate and a 3'-hydroxyl group; requires a central core of homology in the junction. The consensus cleavage sequence is 5'-(A/T)TT(C/G)-3'. Cleavage occurs on the 3'-side of the TT dinucleotide at the point of strand exchange. HJ branch migration catalyzed by RuvA-RuvB allows RuvC to scan DNA until it finds its consensus sequence, where it cleaves and resolves the cruciform DNA. The protein is Crossover junction endodeoxyribonuclease RuvC of Pseudomonas putida (strain ATCC 700007 / DSM 6899 / JCM 31910 / BCRC 17059 / LMG 24140 / F1).